The sequence spans 502 residues: MEPVERKLEIGSRSYSKMPLTQQRSSGEPPRLKATPKDELHDLLCVGFGPASLAIAIALHDALDPCLNKTPNSNWQPKVCFLERQKQFAWHSGMLVPGSKMQISFIKDLATMRDPRSSFTFLNYLHQKDRLIHFTNLSTFLPARMEFEDYMRWCAQRFAHVVSYGEEVIEVIPGKTNPSSTLVDFFTVKSRNVETGEISARMARKVVVALGGTAKLPKELPQDPRIMHSSKYCTTLPAMLKDSREAYNIAVLGSGQSAAEIFHDLQKRYPNSKTTLIMRDTAMRPSDDSPFVNEVFNPERVDKFFSLSSAERQRSLTADKATNYSVVRLELIEQIFNDMYLQRVQNPDETQWQHRILPGRKITRVEHYGPHRRMRLHVRAVKDEKDSLVGNGKETLEVDALMVATGYNRNAHEQLLKNVQHLRPAGQENWTPNREYRVELDPSKVNAQAGIWLQGCNEQTHGLSDSLLSILASRSGEMVNSIFGGEFAGTTVPDTTHIRAML.

Positions 1-10 are enriched in basic and acidic residues; that stretch reads MEPVERKLEI. The interval 1–34 is disordered; it reads MEPVERKLEIGSRSYSKMPLTQQRSSGEPPRLKA. Residues 13–26 show a composition bias toward polar residues; that stretch reads RSYSKMPLTQQRSS. FAD is bound by residues 83–91 and Q102; that span reads ERQKQFAWH. K107 contributes to the substrate binding site. V168 contacts FAD. NADP(+)-binding positions include 254–257 and R279; that span reads SGQS. Substrate-binding positions include 293 to 296 and N323; that span reads NEVF. Residue 323–325 coordinates NADP(+); sequence NYS. 466-468 contacts FAD; it reads SLL. Substrate is bound at residue S469.

The protein belongs to the lysine N(6)-hydroxylase/L-ornithine N(5)-oxygenase family. As to quaternary structure, homotetramer. FAD serves as cofactor.

The enzyme catalyses L-ornithine + NADPH + O2 = N(5)-hydroxy-L-ornithine + NADP(+) + H2O. It catalyses the reaction L-ornithine + NADH + O2 = N(5)-hydroxy-L-ornithine + NAD(+) + H2O. It participates in siderophore biosynthesis. Functionally, catalyzes the conversion of L-ornithine to N(5)-hydroxyornithine, the first step in the biosynthesis of all hydroxamate-containing siderophores, such as deferriferrichrysin. In Aspergillus oryzae (strain ATCC 42149 / RIB 40) (Yellow koji mold), this protein is L-ornithine N(5)-monooxygenase.